The primary structure comprises 375 residues: All-trans-retinol dehydrogenase [NAD(+)] ADH1B (375 aa).

At S2 the chain carries N-acetylserine. A Phosphoserine modification is found at S23. A Phosphotyrosine modification is found at Y35. Residues C47, H68, C98, C101, C104, C112, and C175 each coordinate Zn(2+). NAD(+) is bound by residues 200–205 (GLGGVG), D224, K229, 293–295 (VGV), and R370.

It belongs to the zinc-containing alcohol dehydrogenase family. Dimer of identical or non-identical chains of three types; alpha, beta and gamma. It depends on Zn(2+) as a cofactor.

It is found in the cytoplasm. The enzyme catalyses all-trans-retinol + NAD(+) = all-trans-retinal + NADH + H(+). It carries out the reaction all-trans-4-hydroxyretinol + NAD(+) = all-trans-4-hydroxyretinal + NADH + H(+). The catalysed reaction is all-trans-4-oxoretinol + NAD(+) = all-trans-4-oxoretinal + NADH + H(+). Catalyzes the NAD-dependent oxidation of all-trans-retinol and its derivatives such as all-trans-4-hydroxyretinol and may participate in retinoid metabolism. In vitro can also catalyze the NADH-dependent reduction of all-trans-retinal and its derivatives such as all-trans-4-oxoretinal. Catalyzes in the oxidative direction with higher efficiency. Has the same affinity for all-trans-4-hydroxyretinol and all-trans-4-oxoretinal. The protein is All-trans-retinol dehydrogenase [NAD(+)] ADH1B of Homo sapiens (Human).